The chain runs to 770 residues: MDFSKFLADDFDVKDWINAAFRAGPKDGAAGKADGHAATLVMKLQLFIQEVNHAVEETSLQALQNMPKVLRDVEALKQEASFLKEQMILVKEDIKKFEQDTSQSMQVLVEIDQVKSRMQLAAESLQEADKWSTLSADIEETFKTQDIAVISAKLTGMQNSLMMLVDTPDYSEKCVHLEALKNRLEALASPQIVAAFTSQSVDQSKVFVKVFTEIDRMPQLLAYYYKCHKVQLLATWQELCQSDLPLDRQLTGLYDALLGAWHTQTQWATQVFKNPHEVVTVLLIQTLGALVPSLPMCLSAAVERAGPELELTRLLEFYDTTAHFAKGLEMALLPHLQDHNLVKVVELVDAVYGPYKPFQLKYGDMEENNLLIQISAVPLEHGEVIDCVQELSHSVHKLFGLASAAVDRCAKFTNGLGTCGLLTALKSLFAKYVSHFTNALQSIRKKCKLDDIPPNSLFQEDWTAFQNSVRIIATCGELLRQCGDFEQQLANRILSTAGKYLSDSYSPRSLAGFQDSILTDKKSPAKNPWQEYNYLQKDNPAEYASLMEILYTLKEKGSSNHNLLSASRTALTRLNQQAHQLAFDSVFLRIKQQLLLVSRMDSWNTAGIGETLTDDLPAFSLTPLEYISNIGQYIMSLPLNLEPFVTQEDSALELALHAGKLPFPPEQGDELPELDNMADNWLGSIARATMQTYCDVILQIPEVTPHSTKQLATDIDYLINVMDALGLQPSRTLQNIAALLKAKPEEYRQVSKGLPRRLAATVATMRGVNY.

This sequence belongs to the COG7 family. As to quaternary structure, component of the conserved oligomeric Golgi complex which is composed of eight different subunits and is required for normal Golgi morphology and localization.

The protein localises to the golgi apparatus membrane. Required for normal Golgi function. This is Conserved oligomeric Golgi complex subunit 7 (Cog7) from Mus musculus (Mouse).